The primary structure comprises 653 residues: Zinc finger protein 59 (653 aa).

A KRAB domain is found at 14–86 (VTFRDVAVDF…VNEETGRPSP (73 aa)). 16 consecutive C2H2-type zinc fingers follow at residues 172-194 (YECK…QSVH), 200-222 (YECK…QKCH), 256-278 (FACR…GLIH), 284-306 (YECN…QKIH), 312-334 (FQCK…QSSH), 340-362 (FECE…QRIH), 368-390 (FECN…QKTH), 396-418 (LECN…LKTH), 424-446 (FKCK…LTVH), 452-474 (YQCK…ESIH), 480-502 (FQCE…QKSH), 508-530 (FECK…KIVH), 536-558 (FECK…GAVH), 564-586 (YECS…RKIH), 592-614 (FKCQ…QSIH), and 620-642 (FECE…LRIH).

This sequence belongs to the krueppel C2H2-type zinc-finger protein family. As to expression, expressed predominantly in the testis (at protein level).

Its subcellular location is the nucleus. Functionally, may have a role during differentiation processes. This Mus musculus (Mouse) protein is Zinc finger protein 59 (Zfp59).